We begin with the raw amino-acid sequence, 90 residues long: Small ribosomal subunit protein bS20 (90 aa).

A compositionally biased stretch (basic residues) spans 1–11; that stretch reads MAHHKSAKKRI. The tract at residues 1-22 is disordered; the sequence is MAHHKSAKKRIRQTERRTEVNR. Residues 12–22 show a composition bias toward basic and acidic residues; it reads RQTERRTEVNR.

The protein belongs to the bacterial ribosomal protein bS20 family.

In terms of biological role, binds directly to 16S ribosomal RNA. This chain is Small ribosomal subunit protein bS20, found in Paramagnetospirillum magneticum (strain ATCC 700264 / AMB-1) (Magnetospirillum magneticum).